A 641-amino-acid polypeptide reads, in one-letter code: MVAVVQADYSRAEALAAWTRLSDEFIGNCYVSVRPRHAPAWEVVVASAAGSLRLEAFKRAHDHDFLDRLAVAIGNWEQKAQRPDHEIAQMLDQVGDYGLMQGMTNPDKGFMHADILLPLLQARDACAIVVRTEPVFQQLGTAFLVRPDLILTAAHVVMDVDAATGRWASTLKNGLAFHFREKPNQREHPTLAIRPAAVALISHALPHGRPPNLLERSLAAPADTCLDYALIRLAQRVSHLRPVEVVDTAAVKQGKPCWAFGFPGGNALMMDVDLVTDIDPGSGRWLHRANVAAGMSGGCCINHEGQVAGLHEGTLDSEDDAKVKRNRGISIAAIRRDQCRDGKDPLKQVASSPSLEFRDPALVDGWYRAGTALAGEAGAAQWRASVEAALRGRNPDATDSLPAYHPWFARADVEKWIDSAAPDERLSLIHGPPGVGKSFCIHLLRGKLDPYADLVVFNPTQTNDMTWSDATGHAAAANASDYRTAAASVRYRAIDDFLGELRDRSAGGTRTCYVAIDFGPAGRQDRFVGTNWVELIAILAAAGWIRVMLIGLDDYERSVMIDRMESRPETDSVKIAESELAPITAAEFRTYAKHLASARGKPAPKQAEMAKYVDSAVVGVAEPMKMVAAVRAAIELEAALS.

The chain crosses the membrane as a helical span at residues 532–552; the sequence is WVELIAILAAAGWIRVMLIGL.

The protein belongs to the peptidase S1 family.

Its subcellular location is the cell inner membrane. In terms of biological role, possibly a dedicated protease for substrate gasdermin bGSDM; cleaves the bGSDM precursor, releasing the pore-forming moiety, which integrates into the membrane and triggers cell death. Involved in defense against bacteriophages. When this probable 4 gene operon (bGSDM-FE772_23060-FE772_23065-FE772_23070) is inserted into E.coli it provides nearly 100-fold protection against phages T5 and T6 and about 8-fold against phage T4. The operon without bGSDM no longer protects against phage. The protein is Probable serine protease FE772_23065 of Lysobacter enzymogenes.